A 374-amino-acid polypeptide reads, in one-letter code: Guanine nucleotide-binding protein subunit alpha-15 (374 aa).

The 334-residue stretch at 41-374 (GELKLLLLGP…ARYLDEINLL (334 aa)) folds into the G-alpha domain. A G1 motif region spans residues 44 to 57 (KLLLLGPGESGKST). GTP contacts are provided by residues 49 to 56 (GPGESGKS), 183 to 189 (LRSRMPT), 208 to 212 (DAGGQ), 277 to 280 (NKTD), and Ala-346. Residues Ser-56 and Thr-189 each coordinate Mg(2+). A G2 motif region spans residues 181–189 (DVLRSRMPT). Positions 204 to 213 (LRIVDAGGQK) are G3 motif. Positions 273–280 (ILFLNKTD) are G4 motif. The tract at residues 344 to 349 (TCATDT) is G5 motif.

This sequence belongs to the G-alpha family. G(q) subfamily. In terms of assembly, g proteins are composed of 3 units; alpha, beta and gamma. The alpha chain contains the guanine nucleotide binding site.

Guanine nucleotide-binding proteins (G proteins) are involved as modulators or transducers in various transmembrane signaling systems. In Rattus norvegicus (Rat), this protein is Guanine nucleotide-binding protein subunit alpha-15 (Gna15).